A 342-amino-acid chain; its full sequence is Methionine import ATP-binding protein MetN 2 (342 aa).

Residues 2–241 (ISIEGLSKVF…PKQLVTRKFV (240 aa)) form the ABC transporter domain. Residue 38 to 45 (GYSGAGKS) coordinates ATP.

This sequence belongs to the ABC transporter superfamily. Methionine importer (TC 3.A.1.24) family. As to quaternary structure, the complex is composed of two ATP-binding proteins (MetN), two transmembrane proteins (MetI) and a solute-binding protein (MetQ).

The protein localises to the cell membrane. It catalyses the reaction L-methionine(out) + ATP + H2O = L-methionine(in) + ADP + phosphate + H(+). The catalysed reaction is D-methionine(out) + ATP + H2O = D-methionine(in) + ADP + phosphate + H(+). Functionally, part of the ABC transporter complex MetNIQ involved in methionine import. Responsible for energy coupling to the transport system. This is Methionine import ATP-binding protein MetN 2 from Oceanobacillus iheyensis (strain DSM 14371 / CIP 107618 / JCM 11309 / KCTC 3954 / HTE831).